A 132-amino-acid polypeptide reads, in one-letter code: Small ribosomal subunit protein uS8 (132 aa).

This sequence belongs to the universal ribosomal protein uS8 family. In terms of assembly, part of the 30S ribosomal subunit. Contacts proteins S5 and S12.

In terms of biological role, one of the primary rRNA binding proteins, it binds directly to 16S rRNA central domain where it helps coordinate assembly of the platform of the 30S subunit. In Rickettsia typhi (strain ATCC VR-144 / Wilmington), this protein is Small ribosomal subunit protein uS8.